Here is a 200-residue protein sequence, read N- to C-terminus: Pyridoxine/pyridoxamine 5'-phosphate oxidase (200 aa).

FMN contacts are provided by residues 48 to 53 (RMVLLK), 63 to 64 (YT), lysine 70, and glutamine 92. Lysine 53 contributes to the substrate binding site. Residues tyrosine 110, arginine 114, and serine 118 each contribute to the substrate site. FMN-binding positions include 127–128 (QS) and tryptophan 171. Substrate is bound at residue 177-179 (RLH). Arginine 181 contacts FMN.

Belongs to the pyridoxamine 5'-phosphate oxidase family. Homodimer. Requires FMN as cofactor.

It carries out the reaction pyridoxamine 5'-phosphate + O2 + H2O = pyridoxal 5'-phosphate + H2O2 + NH4(+). It catalyses the reaction pyridoxine 5'-phosphate + O2 = pyridoxal 5'-phosphate + H2O2. It participates in cofactor metabolism; pyridoxal 5'-phosphate salvage; pyridoxal 5'-phosphate from pyridoxamine 5'-phosphate: step 1/1. The protein operates within cofactor metabolism; pyridoxal 5'-phosphate salvage; pyridoxal 5'-phosphate from pyridoxine 5'-phosphate: step 1/1. Its function is as follows. Catalyzes the oxidation of either pyridoxine 5'-phosphate (PNP) or pyridoxamine 5'-phosphate (PMP) into pyridoxal 5'-phosphate (PLP). This is Pyridoxine/pyridoxamine 5'-phosphate oxidase from Cereibacter sphaeroides (strain ATCC 17029 / ATH 2.4.9) (Rhodobacter sphaeroides).